A 439-amino-acid polypeptide reads, in one-letter code: MTARAIIIGAPRSGSGKTSVTIGILRALTRRGLKVRGAKSGPDYIDPGFHTAATGLSGVNLDSWAMPPSLLNALAAQQADDTDFVILESAMGLFDGIPAAPGRTGSAADLARLYGLPVLLVLDVSGQSTTAAAVAKGFATYDPDVRMAGVVLNRLGSERHRKLSGDAIEAIGLPVVGAILRDPTLNLPERHLGLVQAGEYDDLMAHLDRLADMAEKSLDLDAVMRLATPLAPAAGGFADALQPPGQRIALAEDGAFTFLYPHVAAYWRKAGAEIVPFSPLADEAPDDSCDVCWLPGGYPELHAGKLAAAETFKAGMARFAATKPIHGECGGFMVLGEALEDASGETHRMLGLLGHATSFAKRKMNLGYREARLRADCPLGAQGALIRGHEFHYAQMTATGNDEPLADLADGLGNPIGASGYRRGHVSGTFFHAIARASA.

The GATase cobBQ-type domain occupies 247 to 439; it reads RIALAEDGAF…FFHAIARASA (193 aa). The Nucleophile role is filled by Cys329.

It belongs to the CobB/CbiA family. Mg(2+) is required as a cofactor.

It carries out the reaction hydrogenobyrinate + 2 L-glutamine + 2 ATP + 2 H2O = hydrogenobyrinate a,c-diamide + 2 L-glutamate + 2 ADP + 2 phosphate + 2 H(+). It functions in the pathway cofactor biosynthesis; adenosylcobalamin biosynthesis; cob(II)yrinate a,c-diamide from precorrin-2 (aerobic route): step 9/10. Catalyzes the ATP-dependent amidation of the two carboxylate groups at positions a and c of hydrogenobyrinate, using either L-glutamine or ammonia as the nitrogen source. The sequence is that of Hydrogenobyrinate a,c-diamide synthase from Mesorhizobium japonicum (strain LMG 29417 / CECT 9101 / MAFF 303099) (Mesorhizobium loti (strain MAFF 303099)).